A 618-amino-acid chain; its full sequence is Pyranose 2-oxidase (618 aa).

The residue at position 170 (His170) is a Tele-8alpha-FAD histidine. The substrate site is built by Gln441 and His443. His540 (proton acceptor) is an active-site residue. Asn583 is an active-site residue.

Belongs to the GMC oxidoreductase family. Homotetramer. The cofactor is FAD.

It catalyses the reaction D-glucose + O2 = 2-dehydro-D-glucose + H2O2. Catalyzes the oxidation of various aldopyranoses and disaccharides on carbon-2 to the corresponding 2-keto sugars concomitant with the reduction of O(2) to H(2)O(2). In Lyophyllum shimeji (Hon-shimeji), this protein is Pyranose 2-oxidase (p2ox).